Consider the following 220-residue polypeptide: MFDIGFSELLLVLVIGLVVLGPERLPVAVRTVSGWIRTLRSLAATVQNELAQELKLQELQDSLKKVEQAGLQNLTPELKASMDELKEAAEALKRSYHVDAGSEAPHTIHNPLVTEPEAIHDGVTPAEPATQVSALAQAPNILEAGTASVADSVVEAAPVTTVKSVVQGEVLVKSTPVQEVGLADVMDKPVTKQQIDTIDSHGTDLSSAGPSRIHQPGGDQ.

The helical transmembrane segment at 1 to 21 (MFDIGFSELLLVLVIGLVVLG) threads the bilayer. Positions 190–220 (VTKQQIDTIDSHGTDLSSAGPSRIHQPGGDQ) are disordered.

This sequence belongs to the TatB family. The Tat system comprises two distinct complexes: a TatABC complex, containing multiple copies of TatA, TatB and TatC subunits, and a separate TatA complex, containing only TatA subunits. Substrates initially bind to the TatABC complex, which probably triggers association of the separate TatA complex to form the active translocon.

The protein resides in the cell inner membrane. Part of the twin-arginine translocation (Tat) system that transports large folded proteins containing a characteristic twin-arginine motif in their signal peptide across membranes. Together with TatC, TatB is part of a receptor directly interacting with Tat signal peptides. TatB may form an oligomeric binding site that transiently accommodates folded Tat precursor proteins before their translocation. The chain is Sec-independent protein translocase protein TatB from Yersinia pseudotuberculosis serotype I (strain IP32953).